A 90-amino-acid chain; its full sequence is UPF0213 protein lmo0166 (90 aa).

In terms of domain architecture, GIY-YIG spans 5–80; sequence SEHFFYVLKC…KKLSRKNKDA (76 aa).

Belongs to the UPF0213 family.

This is UPF0213 protein lmo0166 from Listeria monocytogenes serovar 1/2a (strain ATCC BAA-679 / EGD-e).